Reading from the N-terminus, the 676-residue chain is DNA ligase (676 aa).

NAD(+)-binding positions include 42-46 (DDVYD), 91-92 (SL), and glutamate 121. Lysine 123 serves as the catalytic N6-AMP-lysine intermediate. NAD(+) is bound by residues arginine 144, glutamate 178, lysine 294, and lysine 318. Residues cysteine 412, cysteine 415, cysteine 430, and cysteine 435 each coordinate Zn(2+). One can recognise a BRCT domain in the interval 596-676 (NSTSEFTGKR…QLQAAMDETK (81 aa)).

Belongs to the NAD-dependent DNA ligase family. LigA subfamily. Mg(2+) serves as cofactor. Requires Mn(2+) as cofactor.

It carries out the reaction NAD(+) + (deoxyribonucleotide)n-3'-hydroxyl + 5'-phospho-(deoxyribonucleotide)m = (deoxyribonucleotide)n+m + AMP + beta-nicotinamide D-nucleotide.. Functionally, DNA ligase that catalyzes the formation of phosphodiester linkages between 5'-phosphoryl and 3'-hydroxyl groups in double-stranded DNA using NAD as a coenzyme and as the energy source for the reaction. It is essential for DNA replication and repair of damaged DNA. The chain is DNA ligase from Levilactobacillus brevis (strain ATCC 367 / BCRC 12310 / CIP 105137 / JCM 1170 / LMG 11437 / NCIMB 947 / NCTC 947) (Lactobacillus brevis).